The primary structure comprises 416 residues: Homogentisate 1,2-dioxygenase (416 aa).

The active-site Proton acceptor is His275. Residues His318 and Glu324 each contribute to the Fe cation site. Homogentisate contacts are provided by Tyr333 and His354. His354 contacts Fe cation.

This sequence belongs to the homogentisate dioxygenase family. In terms of assembly, hexamer; dimer of trimers. Requires Fe cation as cofactor.

It carries out the reaction homogentisate + O2 = 4-maleylacetoacetate + H(+). The protein operates within amino-acid degradation; L-phenylalanine degradation; acetoacetate and fumarate from L-phenylalanine: step 4/6. Its function is as follows. Involved in the catabolism of homogentisate (2,5-dihydroxyphenylacetate or 2,5-OH-PhAc), a central intermediate in the degradation of phenylalanine and tyrosine. Catalyzes the oxidative ring cleavage of the aromatic ring of homogentisate to yield maleylacetoacetate. The protein is Homogentisate 1,2-dioxygenase of Legionella pneumophila (strain Corby).